Here is a 415-residue protein sequence, read N- to C-terminus: Protein fuzzy homolog (415 aa).

It belongs to the fuzzy family. As to quaternary structure, component of the CPLANE (ciliogenesis and planar polarity effectors) complex, composed of INTU, FUZ and WDPCP. Interacts with CPLANE1. Interacts with CPLANE2. As to expression, expressed in dermal and epidermal cells.

Its subcellular location is the cytoplasm. It localises to the cytoskeleton. The protein localises to the cilium basal body. Functionally, probable planar cell polarity effector involved in cilium biogenesis. May regulate protein and membrane transport to the cilium. Proposed to function as core component of the CPLANE (ciliogenesis and planar polarity effectors) complex involved in the recruitment of peripheral IFT-A proteins to basal bodies. May regulate the morphogenesis of hair follicles which depends on functional primary cilia. Binds phosphatidylinositol 3-phosphate with highest affinity, followed by phosphatidylinositol 4-phosphate and phosphatidylinositol 5-phosphate. The sequence is that of Protein fuzzy homolog (Fuz) from Mus musculus (Mouse).